Here is a 418-residue protein sequence, read N- to C-terminus: Secreted aspartic protease 5 (418 aa).

A signal peptide spans 1–18; sequence MFLKNILSVLAFALLIDA. Positions 19–76 are cleaved as a propeptide — activation peptide; sequence APVKRSPGFVTLDFNVKRSLVDPDDPTVEAKRSPLFLEFTPSEFPVDETGRDGDVDKR. In terms of domain architecture, Peptidase A1 spans 90–404; the sequence is YTADITVGSD…NLDDKKISMA (315 aa). Aspartate 108 is an active-site residue. 108–110 contributes to the pepstatin A binding site; sequence DTG. Residues cysteine 123 and cysteine 135 are joined by a disulfide bond. Residue 161–162 coordinates pepstatin A; that stretch reads GD. Glutamate 268 lines the Zn(2+) pocket. Aspartate 294 is a catalytic residue. 294–298 lines the pepstatin A pocket; that stretch reads DSGTT. Cysteine 332 and cysteine 370 are joined by a disulfide.

It belongs to the peptidase A1 family.

Its subcellular location is the secreted. It catalyses the reaction Preferential cleavage at the carboxyl of hydrophobic amino acids, but fails to cleave 15-Leu-|-Tyr-16, 16-Tyr-|-Leu-17 and 24-Phe-|-Phe-25 of insulin B chain. Activates trypsinogen, and degrades keratin.. Inhibited by pepstatin A analogs. Functionally, secreted aspartic peptidases (SAPs) are a group of ten acidic hydrolases considered as key virulence factors. These enzymes supply the fungus with nutrient amino acids as well as are able to degrade the selected host's proteins involved in the immune defense. Moreover, acts toward human hemoglobin though limited proteolysis to generate a variety of antimicrobial hemocidins, enabling to compete with the other microorganisms of the same physiological niche using the microbicidal peptides generated from the host protein. This is Secreted aspartic protease 5 from Candida albicans (strain SC5314 / ATCC MYA-2876) (Yeast).